A 265-amino-acid polypeptide reads, in one-letter code: Type II pantothenate kinase (265 aa).

Residue 6–13 participates in ATP binding; sequence DAGGTLIK. The active-site Proton acceptor is glutamate 70. Residues threonine 99, 121–125, tyrosine 137, and serine 225 contribute to the ATP site; that span reads GGMIQ.

This sequence belongs to the type II pantothenate kinase family. As to quaternary structure, homodimer.

The protein localises to the cytoplasm. The catalysed reaction is (R)-pantothenate + ATP = (R)-4'-phosphopantothenate + ADP + H(+). It functions in the pathway cofactor biosynthesis; coenzyme A biosynthesis; CoA from (R)-pantothenate: step 1/5. Catalyzes the phosphorylation of pantothenate (Pan), the first step in CoA biosynthesis. In Staphylococcus epidermidis (strain ATCC 35984 / DSM 28319 / BCRC 17069 / CCUG 31568 / BM 3577 / RP62A), this protein is Type II pantothenate kinase.